The primary structure comprises 539 residues: Phosphoenolpyruvate carboxykinase (ATP) (539 aa).

The substrate site is built by R64, Y206, and K212. Residues K212, H231, and 247–255 (GLSGTGKTT) each bind ATP. Residues K212 and H231 each contribute to the Mn(2+) site. D268 lines the Mn(2+) pocket. ATP is bound by residues E296, R332, 448-449 (RI), and T454. R332 is a substrate binding site.

The protein belongs to the phosphoenolpyruvate carboxykinase (ATP) family. In terms of assembly, monomer. Requires Mn(2+) as cofactor.

The protein resides in the cytoplasm. It carries out the reaction oxaloacetate + ATP = phosphoenolpyruvate + ADP + CO2. It participates in carbohydrate biosynthesis; gluconeogenesis. Functionally, involved in the gluconeogenesis. Catalyzes the conversion of oxaloacetate (OAA) to phosphoenolpyruvate (PEP) through direct phosphoryl transfer between the nucleoside triphosphate and OAA. The protein is Phosphoenolpyruvate carboxykinase (ATP) of Pectobacterium atrosepticum (strain SCRI 1043 / ATCC BAA-672) (Erwinia carotovora subsp. atroseptica).